A 276-amino-acid chain; its full sequence is NADPH-dependent 7-cyano-7-deazaguanine reductase (276 aa).

Substrate is bound at residue 80-82 (VES). An NADPH-binding site is contributed by 82 to 83 (SK). The active-site Thioimide intermediate is the Cys-183. Catalysis depends on Asp-190, which acts as the Proton donor. Residue 222 to 223 (HE) participates in substrate binding. 251–252 (RG) is a binding site for NADPH.

The protein belongs to the GTP cyclohydrolase I family. QueF type 2 subfamily. In terms of assembly, homodimer.

The protein resides in the cytoplasm. The catalysed reaction is 7-aminomethyl-7-carbaguanine + 2 NADP(+) = 7-cyano-7-deazaguanine + 2 NADPH + 3 H(+). It participates in tRNA modification; tRNA-queuosine biosynthesis. Functionally, catalyzes the NADPH-dependent reduction of 7-cyano-7-deazaguanine (preQ0) to 7-aminomethyl-7-deazaguanine (preQ1). The polypeptide is NADPH-dependent 7-cyano-7-deazaguanine reductase (Burkholderia orbicola (strain MC0-3)).